A 177-amino-acid chain; its full sequence is uncharacterized protein (177 aa).

An N-terminal signal peptide occupies residues 1–22; sequence MCGVVVVIVALVPADPLLPAFA. 3 helical membrane-spanning segments follow: residues 31 to 51, 94 to 114, and 136 to 156; these read VFIPFFNISSSIILICSTCVF, ISLMPSFLFPFATLLCLLKFV, and LFPIMLIPPPFLTSSSFLLEI.

The protein localises to the membrane. This is an uncharacterized protein from Saccharomyces cerevisiae (strain ATCC 204508 / S288c) (Baker's yeast).